The chain runs to 110 residues: UPF0060 membrane protein SACE_5620 (110 aa).

The next 4 helical transmembrane spans lie at 8–28 (VVLF…VWQG), 34–54 (GLLW…VATF), 63–83 (ILAA…VVVD), and 89–109 (RWDL…MYAP).

It belongs to the UPF0060 family.

The protein resides in the cell membrane. This chain is UPF0060 membrane protein SACE_5620, found in Saccharopolyspora erythraea (strain ATCC 11635 / DSM 40517 / JCM 4748 / NBRC 13426 / NCIMB 8594 / NRRL 2338).